The sequence spans 308 residues: Mitochondrial import receptor subunit TOM40B (308 aa).

Residues Met1–Ser29 form a disordered region. Residues Pro281–Gly308 are required for mitochondrial targeting.

It belongs to the Tom40 family. As to quaternary structure, forms part of the preprotein translocase of the outer mitochondrial membrane (TOM complex) containing TOMM22, TOMM40, TOMM40L and TOMM70. Interacts with mitochondrial targeting sequences.

The protein localises to the mitochondrion outer membrane. Its function is as follows. Potential channel-forming protein implicated in import of protein precursors into mitochondria. The protein is Mitochondrial import receptor subunit TOM40B of Bos taurus (Bovine).